A 387-amino-acid chain; its full sequence is Large ribosomal subunit protein uL3 (387 aa).

This sequence belongs to the universal ribosomal protein uL3 family.

It localises to the cytoplasm. The chain is Large ribosomal subunit protein uL3 (RPL3) from Eremothecium gossypii (strain ATCC 10895 / CBS 109.51 / FGSC 9923 / NRRL Y-1056) (Yeast).